The following is a 991-amino-acid chain: Translation initiation factor IF-2 (991 aa).

Disordered stretches follow at residues 58-82 (EGKKITLTRRQTSEIRQADATGRSR) and 106-405 (QARA…PAPQ). A compositionally biased stretch (low complexity) spans 106–164 (QARADAAASDAAPAEPAPAAAEPSASAPVTAPVNAPAADAPQAPATAAPDTAAPAAETP). The segment covering 165–175 (SQPPAVEPQPA) has biased composition (pro residues). Composition is skewed to low complexity over residues 190–206 (AKPAEAPAEPAAPAAVE), 221–258 (AVQAEIETAPAPAAESAQAARPEPVTPKAEPAPAASKP), and 267–276 (APVPVAAPAV). Residues 279-289 (AGREEARRAAE) are compositionally biased toward basic and acidic residues. The segment covering 379-388 (RAGGKGGKGG) has biased composition (gly residues). Residues 395–405 (QAERRHEPAPQ) are compositionally biased toward basic and acidic residues. In terms of domain architecture, tr-type G spans 492–659 (PRAPVVTVMG…NVLLQAEILE (168 aa)). A G1 region spans residues 501-508 (GHVDHGKT). 501-508 (GHVDHGKT) serves as a coordination point for GTP. The interval 526 to 530 (GITQH) is G2. The G3 stretch occupies residues 547-550 (DTPG). GTP-binding positions include 547 to 551 (DTPGH) and 601 to 604 (NKID). A G4 region spans residues 601 to 604 (NKID). A G5 region spans residues 637–639 (SAK).

Belongs to the TRAFAC class translation factor GTPase superfamily. Classic translation factor GTPase family. IF-2 subfamily.

The protein resides in the cytoplasm. Its function is as follows. One of the essential components for the initiation of protein synthesis. Protects formylmethionyl-tRNA from spontaneous hydrolysis and promotes its binding to the 30S ribosomal subunits. Also involved in the hydrolysis of GTP during the formation of the 70S ribosomal complex. The protein is Translation initiation factor IF-2 of Bordetella petrii (strain ATCC BAA-461 / DSM 12804 / CCUG 43448).